A 504-amino-acid polypeptide reads, in one-letter code: Xylose import ATP-binding protein XylG (504 aa).

ABC transporter domains lie at 5 to 242 and 259 to 500; these read LEMK…VGRE and LRVE…VMEA. 37 to 44 is an ATP binding site; sequence GENGSGKS.

It belongs to the ABC transporter superfamily. Xylose importer (TC 3.A.1.2.4) family. In terms of assembly, the complex is composed of two ATP-binding proteins (XylG), two transmembrane proteins (XylH) and a solute-binding protein (XylF).

The protein localises to the cell inner membrane. The catalysed reaction is D-xylose(out) + ATP + H2O = D-xylose(in) + ADP + phosphate + H(+). Its function is as follows. Part of the ABC transporter complex XylFGH involved in xylose import. Responsible for energy coupling to the transport system. The chain is Xylose import ATP-binding protein XylG from Histophilus somni (strain 129Pt) (Haemophilus somnus).